The following is a 469-amino-acid chain: Ribosomal protein uS12 methylthiotransferase RimO (469 aa).

The MTTase N-terminal domain occupies 17–132; sequence PRVGFVSLGC…VMDAVHLNLP (116 aa). Residues Cys-26, Cys-62, Cys-91, Cys-167, Cys-171, and Cys-174 each coordinate [4Fe-4S] cluster. The 243-residue stretch at 153–395 folds into the Radical SAM core domain; sequence LTPKHYAYLK…AVAEEVSSLK (243 aa). Positions 397 to 469 constitute a TRAM domain; the sequence is QQRVGATMQV…QGHDLVAIPV (73 aa).

This sequence belongs to the methylthiotransferase family. RimO subfamily. [4Fe-4S] cluster serves as cofactor.

The protein resides in the cytoplasm. It carries out the reaction L-aspartate(89)-[ribosomal protein uS12]-hydrogen + (sulfur carrier)-SH + AH2 + 2 S-adenosyl-L-methionine = 3-methylsulfanyl-L-aspartate(89)-[ribosomal protein uS12]-hydrogen + (sulfur carrier)-H + 5'-deoxyadenosine + L-methionine + A + S-adenosyl-L-homocysteine + 2 H(+). Catalyzes the methylthiolation of an aspartic acid residue of ribosomal protein uS12. The polypeptide is Ribosomal protein uS12 methylthiotransferase RimO (Polaromonas sp. (strain JS666 / ATCC BAA-500)).